The primary structure comprises 142 residues: Large ribosomal subunit protein uL13 (142 aa).

Belongs to the universal ribosomal protein uL13 family. In terms of assembly, part of the 50S ribosomal subunit.

Functionally, this protein is one of the early assembly proteins of the 50S ribosomal subunit, although it is not seen to bind rRNA by itself. It is important during the early stages of 50S assembly. The polypeptide is Large ribosomal subunit protein uL13 (Paraburkholderia phytofirmans (strain DSM 17436 / LMG 22146 / PsJN) (Burkholderia phytofirmans)).